Consider the following 156-residue polypeptide: Ribonuclease H (156 aa).

Residues 1-142 (MGKQVEIFTD…CDELARAAAN (142 aa)) form the RNase H type-1 domain. Mg(2+)-binding residues include aspartate 10, glutamate 48, aspartate 70, and aspartate 134.

The protein belongs to the RNase H family. As to quaternary structure, monomer. The cofactor is Mg(2+).

The protein resides in the cytoplasm. It catalyses the reaction Endonucleolytic cleavage to 5'-phosphomonoester.. Functionally, endonuclease that specifically degrades the RNA of RNA-DNA hybrids. This chain is Ribonuclease H, found in Photorhabdus luminescens (Xenorhabdus luminescens).